A 132-amino-acid polypeptide reads, in one-letter code: Small ribosomal subunit protein uS8 (132 aa).

The protein belongs to the universal ribosomal protein uS8 family. As to quaternary structure, part of the 30S ribosomal subunit. Contacts proteins S5 and S12.

Its function is as follows. One of the primary rRNA binding proteins, it binds directly to 16S rRNA central domain where it helps coordinate assembly of the platform of the 30S subunit. The protein is Small ribosomal subunit protein uS8 of Mycolicibacterium smegmatis (strain ATCC 700084 / mc(2)155) (Mycobacterium smegmatis).